A 449-amino-acid polypeptide reads, in one-letter code: Probable glucuronosyltransferase 47 A (449 aa).

Over 1–31 (MEHPLECADSCSLAMSWFCNKKCRGWGLMKR) the chain is Cytoplasmic. A helical; Signal-anchor for type II membrane protein transmembrane segment spans residues 32–52 (TVVASGLRSVVLLLLFIYFVQ). Residues 53–449 (DVTAEMGHQR…GDLYPWGNDL (397 aa)) lie on the Lumenal side of the membrane. N-linked (GlcNAc...) asparagine glycans are attached at residues N172 and N433.

Belongs to the glycosyltransferase 47 family. As to expression, mostly expressed in newly formed or expanding tissues.

The protein resides in the golgi apparatus membrane. Involved in the synthesis of glucuronoxylan hemicellulose in secondary cell walls. The protein is Probable glucuronosyltransferase 47 A of Physcomitrium patens (Spreading-leaved earth moss).